Consider the following 156-residue polypeptide: Probable cyclic pyranopterin monophosphate synthase (156 aa).

Residues 73–75 and 109–110 each bind substrate; these read LCH and ME. The active site involves Asp-124.

Belongs to the MoaC family. In terms of assembly, homohexamer; trimer of dimers.

The enzyme catalyses (8S)-3',8-cyclo-7,8-dihydroguanosine 5'-triphosphate = cyclic pyranopterin phosphate + diphosphate. Its pathway is cofactor biosynthesis; molybdopterin biosynthesis. Its function is as follows. Catalyzes the conversion of (8S)-3',8-cyclo-7,8-dihydroguanosine 5'-triphosphate to cyclic pyranopterin monophosphate (cPMP). The sequence is that of Probable cyclic pyranopterin monophosphate synthase from Pyrococcus furiosus (strain ATCC 43587 / DSM 3638 / JCM 8422 / Vc1).